The sequence spans 100 residues: Small ribosomal subunit protein uS14c (100 aa).

Belongs to the universal ribosomal protein uS14 family. Part of the 30S ribosomal subunit.

The protein resides in the plastid. Its subcellular location is the chloroplast. Its function is as follows. Binds 16S rRNA, required for the assembly of 30S particles. In Platanus occidentalis (Sycamore), this protein is Small ribosomal subunit protein uS14c.